The chain runs to 124 residues: Urease subunit beta (124 aa).

Belongs to the urease beta subunit family. In terms of assembly, heterotrimer of UreA (gamma), UreB (beta) and UreC (alpha) subunits. Three heterotrimers associate to form the active enzyme.

The protein resides in the cytoplasm. It catalyses the reaction urea + 2 H2O + H(+) = hydrogencarbonate + 2 NH4(+). It functions in the pathway nitrogen metabolism; urea degradation; CO(2) and NH(3) from urea (urease route): step 1/1. In Ureaplasma parvum serovar 3 (strain ATCC 27815 / 27 / NCTC 11736), this protein is Urease subunit beta.